The chain runs to 1150 residues: ATP-dependent helicase/deoxyribonuclease subunit B (1150 aa).

Position 8 to 15 (8 to 15 (GRAGSGKS)) interacts with ATP. Residues Cys786, Cys1106, Cys1109, and Cys1115 each coordinate [4Fe-4S] cluster.

This sequence belongs to the helicase family. AddB/RexB type 1 subfamily. Heterodimer of AddA and AddB. Mg(2+) serves as cofactor. The cofactor is [4Fe-4S] cluster.

Its function is as follows. The heterodimer acts as both an ATP-dependent DNA helicase and an ATP-dependent, dual-direction single-stranded exonuclease. Recognizes the chi site generating a DNA molecule suitable for the initiation of homologous recombination. The AddB subunit has 5' -&gt; 3' nuclease activity but not helicase activity. In Clostridium botulinum (strain Okra / Type B1), this protein is ATP-dependent helicase/deoxyribonuclease subunit B.